We begin with the raw amino-acid sequence, 107 residues long: Quaternary ammonium compound-resistance protein QacC (107 aa).

At 1-2 (MP) the chain is on the cytoplasmic side. A helical membrane pass occupies residues 3 to 20 (YIYLIIAISTEVIGSAFL). Topologically, residues 21 to 29 (KSSEGFSKF) are extracellular. The chain crosses the membrane as a helical span at residues 30–47 (IPSLGTIISFGICFYFLS). Over 48 to 56 (KTMQHLPLN) the chain is Cytoplasmic. A helical membrane pass occupies residues 57 to 75 (ITYATWAGLGLVLTTVVSI). Topologically, residues 76-85 (IIFKEQINLI) are extracellular. The chain crosses the membrane as a helical span at residues 86–103 (TIVSIVLIIVGVVSLNIF). The Cytoplasmic portion of the chain corresponds to 104–107 (GTSH).

Belongs to the drug/metabolite transporter (DMT) superfamily. Small multidrug resistance (SMR) (TC 2.A.7.1) family.

The protein localises to the cell membrane. With respect to regulation, ethidium export is inhibited by N-ethylmaleimide (NEM). In terms of biological role, multidrug exporter. Is implicated for the resistance to bacteriocidal quaternary ammonium compounds and ethidium bromide. This chain is Quaternary ammonium compound-resistance protein QacC, found in Staphylococcus aureus.